Reading from the N-terminus, the 258-residue chain is Regulatory protein RecX (258 aa).

Belongs to the RecX family.

The protein resides in the cytoplasm. Functionally, modulates RecA activity. The protein is Regulatory protein RecX of Streptococcus mutans serotype c (strain ATCC 700610 / UA159).